We begin with the raw amino-acid sequence, 474 residues long: Bifunctional protein HldE (474 aa).

A ribokinase region spans residues M1–E318. Position 194 to 197 (N194 to E197) interacts with ATP. The active site involves D263. The cytidylyltransferase stretch occupies residues F343 to G474.

This sequence in the N-terminal section; belongs to the carbohydrate kinase PfkB family. The protein in the C-terminal section; belongs to the cytidylyltransferase family. Homodimer.

It catalyses the reaction D-glycero-beta-D-manno-heptose 7-phosphate + ATP = D-glycero-beta-D-manno-heptose 1,7-bisphosphate + ADP + H(+). The enzyme catalyses D-glycero-beta-D-manno-heptose 1-phosphate + ATP + H(+) = ADP-D-glycero-beta-D-manno-heptose + diphosphate. It functions in the pathway nucleotide-sugar biosynthesis; ADP-L-glycero-beta-D-manno-heptose biosynthesis; ADP-L-glycero-beta-D-manno-heptose from D-glycero-beta-D-manno-heptose 7-phosphate: step 1/4. Its pathway is nucleotide-sugar biosynthesis; ADP-L-glycero-beta-D-manno-heptose biosynthesis; ADP-L-glycero-beta-D-manno-heptose from D-glycero-beta-D-manno-heptose 7-phosphate: step 3/4. Catalyzes the phosphorylation of D-glycero-D-manno-heptose 7-phosphate at the C-1 position to selectively form D-glycero-beta-D-manno-heptose-1,7-bisphosphate. Its function is as follows. Catalyzes the ADP transfer from ATP to D-glycero-beta-D-manno-heptose 1-phosphate, yielding ADP-D-glycero-beta-D-manno-heptose. The polypeptide is Bifunctional protein HldE (Pseudomonas paraeruginosa (strain DSM 24068 / PA7) (Pseudomonas aeruginosa (strain PA7))).